A 239-amino-acid polypeptide reads, in one-letter code: tRNA uridine(34) hydroxylase (239 aa).

The Rhodanese domain occupies 124-214 (QGRELVMLDT…GILKYFEETD (91 aa)). C178 functions as the Cysteine persulfide intermediate in the catalytic mechanism.

Belongs to the TrhO family.

It catalyses the reaction uridine(34) in tRNA + AH2 + O2 = 5-hydroxyuridine(34) in tRNA + A + H2O. Its function is as follows. Catalyzes oxygen-dependent 5-hydroxyuridine (ho5U) modification at position 34 in tRNAs. In Bordetella parapertussis (strain 12822 / ATCC BAA-587 / NCTC 13253), this protein is tRNA uridine(34) hydroxylase.